A 101-amino-acid chain; its full sequence is Histone H1-like protein EM6 (101 aa).

2 stretches are compositionally biased toward basic residues: residues 1–35 and 58–101; these read AKKRSRSRKRSASRKRSRSRKRSASKKSSKKHVRK and AKKK…RRRR. The tract at residues 1-101 is disordered; sequence AKKRSRSRKR…SRTARSRRRR (101 aa). A run of 4 repeats spans residues 3-4, 5-6, 7-8, and 9-10. Positions 3 to 22 are 10 X 2 AA approximate tandem repeats of [SK]-R; the sequence is KRSRSRKRSASRKRSRSRKR. One copy of the 5; approximate repeat lies at 11-12; the sequence is SA. 5 tandem repeats follow at residues 13–14, 15–16, 17–18, 19–20, and 21–22. A globular region spans residues 32–65; sequence HVRKALAAGMKNHLLAHPKGSNNFILAKKKAPRR.

In terms of tissue distribution, sperm.

The protein localises to the nucleus. It localises to the chromosome. The polypeptide is Histone H1-like protein EM6 (Ensis minor (Razor shell)).